Reading from the N-terminus, the 378-residue chain is Probable pectin lyase A (378 aa).

The N-terminal stretch at 1–18 (MKYQGLLAIAGCIASASA) is a signal peptide. Cystine bridges form between C81-C100 and C90-C224. N-linked (GlcNAc...) asparagine glycosylation occurs at N127. The active site involves R254. C321 and C329 are oxidised to a cystine.

This sequence belongs to the polysaccharide lyase 1 family.

The protein localises to the secreted. It carries out the reaction Eliminative cleavage of (1-&gt;4)-alpha-D-galacturonan methyl ester to give oligosaccharides with 4-deoxy-6-O-methyl-alpha-D-galact-4-enuronosyl groups at their non-reducing ends.. Its function is as follows. Pectinolytic enzymes consist of four classes of enzymes: pectin lyase, polygalacturonase, pectin methylesterase and rhamnogalacturonase. Among pectinolytic enzymes, pectin lyase is the most important in depolymerization of pectin, since it cleaves internal glycosidic bonds of highly methylated pectins. The protein is Probable pectin lyase A (pelA) of Neosartorya fischeri (strain ATCC 1020 / DSM 3700 / CBS 544.65 / FGSC A1164 / JCM 1740 / NRRL 181 / WB 181) (Aspergillus fischerianus).